The following is a 284-amino-acid chain: 2-dehydro-3-deoxyphosphooctonate aldolase (284 aa).

This sequence belongs to the KdsA family.

It localises to the cytoplasm. The catalysed reaction is D-arabinose 5-phosphate + phosphoenolpyruvate + H2O = 3-deoxy-alpha-D-manno-2-octulosonate-8-phosphate + phosphate. It functions in the pathway carbohydrate biosynthesis; 3-deoxy-D-manno-octulosonate biosynthesis; 3-deoxy-D-manno-octulosonate from D-ribulose 5-phosphate: step 2/3. The protein operates within bacterial outer membrane biogenesis; lipopolysaccharide biosynthesis. The chain is 2-dehydro-3-deoxyphosphooctonate aldolase from Bordetella petrii (strain ATCC BAA-461 / DSM 12804 / CCUG 43448).